A 96-amino-acid polypeptide reads, in one-letter code: Prokineticin Bv8-like peptide 2 (96 aa).

The signal sequence occupies residues 1–19; the sequence is MKCFAQIVVLLLVIAFSHG. 5 cysteine pairs are disulfide-bonded: Cys-26–Cys-38, Cys-32–Cys-50, Cys-37–Cys-78, Cys-60–Cys-86, and Cys-80–Cys-95.

The protein belongs to the AVIT (prokineticin) family. As to expression, expressed by the skin glands.

Its subcellular location is the secreted. Its function is as follows. Potent agonist for both PKR1/PROKR1 and PKR2/PROKR2, and inducer of a potent and long-lasting hyperalgesia. Also potentiates capsaicin-induced TRPV1 current when tested on DRG neurons. At subnanomolar concentrations, this protein both induces potent chemotaxis of macrophages and stimulates LPS-induced production of the pro-inflammatory cytokines IL-1 and IL-12. In vivo, potently stimulates the contraction of the guinea-pig gastrointestinal (GI) smooth muscle (nanomolar concentration) and rabbit aortic rings. This chain is Prokineticin Bv8-like peptide 2, found in Bombina maxima (Giant fire-bellied toad).